Consider the following 910-residue polypeptide: Protein CHROMATIN REMODELING 25 (910 aa).

Composition is skewed to acidic residues over residues 1–18 (MEEE…DDSS) and 26–39 (QDSE…ECED). The segment at 1–39 (MEEEDEEILSSSDCDDSSDSYKDDSQDSEGENDNPECED) is disordered. The Helicase ATP-binding domain occupies 198 to 371 (LHGSANINGC…FAMVNFTNPG (174 aa)). 211 to 218 (DDMGLGKT) contacts ATP. Residues 322 to 325 (DEAH) carry the DEAH box motif. Residues 396 to 417 (TEEEKNLAADRSAELSSKVNQF) adopt a coiled-coil conformation. Residues 538 to 696 (VLSRLLANLR…QTDNSTRQGN (159 aa)) enclose the Helicase C-terminal domain. Residues 828–861 (VSPKTVESEEHNRNQPVNKRAFNKPQQRPREPLQ) form a disordered region.

This sequence belongs to the SNF2/RAD54 helicase family. Interacts with RAD51. Binds to the geminivirus mungbean yellow mosaic virus (MYMV) and to the tomato leaf curl virus (ToLCV) replication-associated proteins. Expressed ubiquitously, with the highest levels of expression in flower buds. Present in flower buds (at protein level).

It is found in the nucleus. Functionally, dissociates RAD51 from nucleoprotein filaments formed on dsDNA. Could be involved in the turnover of RAD51 protein-dsDNA filaments. Addition of RAD54 overcomes inhibition of DNA strand exchange by RAD51 bound to substrate dsDNA. Species preference in the RAD51 dissociation and DNA strand exchange assays underlines the importance of specific RAD54-RAD51 interactions. RAD51 is unable to release dsDNA upon ATP hydrolysis, leaving it stuck on the heteroduplex DNA product after DNA strand exchange. Involved in DNA repair and mitotic recombination. Functions in the homologous recombinational DNA repair (RAD52) pathway. Required for synthesis-dependent strand annealing (SDSA) during double-strand break repair. In terms of biological role, facilitates geminiviral replication (e.g. geminivirus mungbean yellow mosaic virus (MYMV) and tomato leaf curl virus (ToLCV)). This Arabidopsis thaliana (Mouse-ear cress) protein is Protein CHROMATIN REMODELING 25 (CHR25).